A 79-amino-acid polypeptide reads, in one-letter code: Large ribosomal subunit protein bL28 (79 aa).

Residues 1 to 26 (MAKVCQVTGKRPQSGNNVSHANKKTN) form a disordered region. Residues 11–20 (RPQSGNNVSH) show a composition bias toward polar residues.

The protein belongs to the bacterial ribosomal protein bL28 family.

The chain is Large ribosomal subunit protein bL28 from Coxiella burnetii (strain CbuK_Q154) (Coxiella burnetii (strain Q154)).